The primary structure comprises 945 residues: Leucine--tRNA ligase (945 aa).

Positions 43–53 (PYPNGAIHIGH) match the 'HIGH' region motif. Positions 638–642 (KMSKS) match the 'KMSKS' region motif. Lys641 contacts ATP.

The protein belongs to the class-I aminoacyl-tRNA synthetase family.

Its subcellular location is the cytoplasm. It catalyses the reaction tRNA(Leu) + L-leucine + ATP = L-leucyl-tRNA(Leu) + AMP + diphosphate. In Pyrobaculum neutrophilum (strain DSM 2338 / JCM 9278 / NBRC 100436 / V24Sta) (Thermoproteus neutrophilus), this protein is Leucine--tRNA ligase.